Here is a 223-residue protein sequence, read N- to C-terminus: Phosphoribosylformylglycinamidine synthase subunit PurQ (223 aa).

One can recognise a Glutamine amidotransferase type-1 domain in the interval Phe-3–Val-223. Cys-85 serves as the catalytic Nucleophile. Active-site residues include His-193 and Glu-195.

In terms of assembly, part of the FGAM synthase complex composed of 1 PurL, 1 PurQ and 2 PurS subunits.

The protein resides in the cytoplasm. It carries out the reaction N(2)-formyl-N(1)-(5-phospho-beta-D-ribosyl)glycinamide + L-glutamine + ATP + H2O = 2-formamido-N(1)-(5-O-phospho-beta-D-ribosyl)acetamidine + L-glutamate + ADP + phosphate + H(+). The enzyme catalyses L-glutamine + H2O = L-glutamate + NH4(+). Its pathway is purine metabolism; IMP biosynthesis via de novo pathway; 5-amino-1-(5-phospho-D-ribosyl)imidazole from N(2)-formyl-N(1)-(5-phospho-D-ribosyl)glycinamide: step 1/2. Its function is as follows. Part of the phosphoribosylformylglycinamidine synthase complex involved in the purines biosynthetic pathway. Catalyzes the ATP-dependent conversion of formylglycinamide ribonucleotide (FGAR) and glutamine to yield formylglycinamidine ribonucleotide (FGAM) and glutamate. The FGAM synthase complex is composed of three subunits. PurQ produces an ammonia molecule by converting glutamine to glutamate. PurL transfers the ammonia molecule to FGAR to form FGAM in an ATP-dependent manner. PurS interacts with PurQ and PurL and is thought to assist in the transfer of the ammonia molecule from PurQ to PurL. This chain is Phosphoribosylformylglycinamidine synthase subunit PurQ, found in Staphylococcus aureus (strain Mu50 / ATCC 700699).